The primary structure comprises 343 residues: tRNA N6-adenosine threonylcarbamoyltransferase (343 aa).

2 residues coordinate Fe cation: His116 and His120. Substrate contacts are provided by residues 138-142 (LVSGG), Asp172, Gly185, Asp189, and Asn277. Asp305 contacts Fe cation.

This sequence belongs to the KAE1 / TsaD family. Fe(2+) serves as cofactor.

Its subcellular location is the cytoplasm. It carries out the reaction L-threonylcarbamoyladenylate + adenosine(37) in tRNA = N(6)-L-threonylcarbamoyladenosine(37) in tRNA + AMP + H(+). Functionally, required for the formation of a threonylcarbamoyl group on adenosine at position 37 (t(6)A37) in tRNAs that read codons beginning with adenine. Is involved in the transfer of the threonylcarbamoyl moiety of threonylcarbamoyl-AMP (TC-AMP) to the N6 group of A37, together with TsaE and TsaB. TsaD likely plays a direct catalytic role in this reaction. The sequence is that of tRNA N6-adenosine threonylcarbamoyltransferase from Mycobacterium ulcerans (strain Agy99).